The following is a 247-amino-acid chain: Flagellin B1 (247 aa).

Residues Met-1–Ala-20 constitute a propeptide that is removed on maturation.

Belongs to the archaeal flagellin family. Post-translationally, glycosylated.

It localises to the archaeal flagellum. Flagellin is the subunit protein which polymerizes to form the filaments of archaeal flagella. This is Flagellin B1 from Thermoplasma volcanium (strain ATCC 51530 / DSM 4299 / JCM 9571 / NBRC 15438 / GSS1).